Here is a 595-residue protein sequence, read N- to C-terminus: UvrABC system protein C (595 aa).

The 78-residue stretch at 14-91 (SNPGCYLHKD…IQENMPKFNI (78 aa)) folds into the GIY-YIG domain. In terms of domain architecture, UVR spans 196 to 231 (DKIVNQLKAKMKDMSDQMEFERAAEYRDLIEAVSTL).

Belongs to the UvrC family. Interacts with UvrB in an incision complex.

It is found in the cytoplasm. The UvrABC repair system catalyzes the recognition and processing of DNA lesions. UvrC both incises the 5' and 3' sides of the lesion. The N-terminal half is responsible for the 3' incision and the C-terminal half is responsible for the 5' incision. The chain is UvrABC system protein C from Streptococcus thermophilus (strain CNRZ 1066).